The following is a 421-amino-acid chain: ATP-dependent RNA helicase RhlB (421 aa).

Positions 9-37 match the Q motif motif; the sequence is QKFSDFALHPQVVEALEKKGFYNCTPIQA. The 180-residue stretch at 40 to 219 folds into the Helicase ATP-binding domain; that stretch reads LPLTLAGRDV…FEQMNNAEYV (180 aa). 53 to 60 is a binding site for ATP; the sequence is AQTGTGKT. The short motif at 165–168 is the DEAD box element; it reads DEAD. The Helicase C-terminal domain occupies 245-390; sequence RLLQTLIEEE…VSKYNPEALM (146 aa). The tract at residues 396-421 is disordered; that stretch reads PLRLTRSRPGNGPRRAGAPRNRRRSG. A compositionally biased stretch (low complexity) spans 402-414; sequence SRPGNGPRRAGAP.

It belongs to the DEAD box helicase family. RhlB subfamily. In terms of assembly, component of the RNA degradosome, which is a multiprotein complex involved in RNA processing and mRNA degradation.

It localises to the cytoplasm. The catalysed reaction is ATP + H2O = ADP + phosphate + H(+). Functionally, DEAD-box RNA helicase involved in RNA degradation. Has RNA-dependent ATPase activity and unwinds double-stranded RNA. This chain is ATP-dependent RNA helicase RhlB, found in Salmonella agona (strain SL483).